We begin with the raw amino-acid sequence, 204 residues long: MEPITRVTGTGVPLKRSNVDTDQIVPSQFLKRVTKTGFEDALFFQWRKDPAFFVNQPAYEGATVLVAGPDFGTGSSREHAVWALRDYGFRAVLSPRFGDIFRGNSGKQGLLTGIVTEDDVERLWAAMDAEPGLDLTVDLVERIATAPGLTVPFEIDEYTRWRLLEGLDDIALTLRDEDAITTFEHRRASWRPRTLPARPAALEN.

Belongs to the LeuD family. LeuD type 1 subfamily. Heterodimer of LeuC and LeuD.

It carries out the reaction (2R,3S)-3-isopropylmalate = (2S)-2-isopropylmalate. The protein operates within amino-acid biosynthesis; L-leucine biosynthesis; L-leucine from 3-methyl-2-oxobutanoate: step 2/4. In terms of biological role, catalyzes the isomerization between 2-isopropylmalate and 3-isopropylmalate, via the formation of 2-isopropylmaleate. This Clavibacter michiganensis subsp. michiganensis (strain NCPPB 382) protein is 3-isopropylmalate dehydratase small subunit.